Consider the following 110-residue polypeptide: Large ribosomal subunit protein uL22 (110 aa).

It belongs to the universal ribosomal protein uL22 family. In terms of assembly, part of the 50S ribosomal subunit.

This protein binds specifically to 23S rRNA; its binding is stimulated by other ribosomal proteins, e.g. L4, L17, and L20. It is important during the early stages of 50S assembly. It makes multiple contacts with different domains of the 23S rRNA in the assembled 50S subunit and ribosome. In terms of biological role, the globular domain of the protein is located near the polypeptide exit tunnel on the outside of the subunit, while an extended beta-hairpin is found that lines the wall of the exit tunnel in the center of the 70S ribosome. This Bdellovibrio bacteriovorus (strain ATCC 15356 / DSM 50701 / NCIMB 9529 / HD100) protein is Large ribosomal subunit protein uL22.